The primary structure comprises 530 residues: PC4 and SFRS1-interacting protein (530 aa).

One can recognise a PWWP domain in the interval 1 to 64; sequence MTRDFKPGDL…PKDIFPYSEN (64 aa). A Glycyl lysine isopeptide (Lys-Gly) (interchain with G-Cter in SUMO2) cross-link involves residue Lys-75. Residues 86–349 are disordered; that stretch reads NNPKVKFSSQ…VEKKRETSMD (264 aa). Residues 92-104 show a composition bias toward polar residues; it reads FSSQQASTKQSNA. Ser-102, Ser-105, and Ser-106 each carry phosphoserine. Residues 113–135 show a composition bias toward basic and acidic residues; sequence KETSVSKEDTDHEEKASNEDVTK. Residues Thr-115 and Thr-122 each carry the phosphothreonine modification. Ser-129 bears the Phosphoserine mark. A Phosphothreonine modification is found at Thr-141. Positions 144–153 are enriched in basic residues; it reads AARRGRKRKA. Positions 146–156 match the Nuclear localization signal motif; sequence RRGRKRKAEKQ. Thr-167 carries the post-translational modification Phosphothreonine. 2 positions are modified to phosphoserine: Ser-177 and Ser-206. A compositionally biased stretch (basic and acidic residues) spans 213 to 261; the sequence is EEDKSKKKGQEEKQPKKQLKKDEEGQKEEDKPRKEPDKKEGKKEVESKR. Position 271 is a phosphoserine (Ser-271). A Phosphothreonine modification is found at Thr-272. Residues Ser-273 and Ser-275 each carry the phosphoserine modification. Residues 274-283 show a composition bias toward acidic residues; that stretch reads DSEEEGDDQE. The span at 287 to 302 shows a compositional bias: basic residues; that stretch reads KRKGGRNFQTAHRRNM. The span at 305–349 shows a compositional bias: basic and acidic residues; the sequence is GQHEKEAADRKRKQEEQMETEQQNKDEGKKPEVKKVEKKRETSMD. Coiled-coil stretches lie at residues 306-334 and 371-395; these read QHEK…EGKK and NRCI…KHTE. The interval 340–417 is integrase-binding domain (IBD); the sequence is VEKKRETSMD…VSQIIMEKST (78 aa). The residue at position 434 (Ser-434) is a Phosphoserine. At Thr-437 the chain carries Phosphothreonine. Phosphoserine is present on Ser-443. The span at 446–473 shows a compositional bias: basic and acidic residues; that stretch reads EQRQHEEANKTKDQGKKGPNKKLDKEQT. The interval 446–530 is disordered; the sequence is EQRQHEEANK…ISLKDSTLDN (85 aa). Residues 474 to 494 show a composition bias toward polar residues; that stretch reads GSKTLNGGSDAPDSNQAQHNG. The segment covering 498–530 has biased composition (basic and acidic residues); the sequence is EESKDKHEASSKKKPSNEERETEISLKDSTLDN. Arg-517 is modified (citrulline). A Phosphoserine modification is found at Ser-522. Thr-527 bears the Phosphothreonine mark.

This sequence belongs to the HDGF family. As to quaternary structure, monomer. Interacts with IFRD1/PC4. Interacts (via IBD domain) with POGZ (via IBM motif) and CDCA7L (via IBM motifs). Interacts (via IBD domain) with KMT2A (via IBM motifs) with a moderate affinity whereas interacts with the KMT2A-MEN1 complex with a greater affinity; MEN1 enhances interaction of KMT2A with PSIP1. Interacts (via IBD domain) with IWS1 (via IBM motif), MED1 (via IBM motif) and DBF4 (via IBM motifs). (Microbial infection) Interacts (via IBD domain) with feline immunodeficiency virus (FIV) integrase (IN), determining its nuclear localization, its tight association with chromatin and its protection from the proteasome. Post-translationally, citrullinated by PADI4.

It localises to the nucleus. Transcriptional coactivator involved in neuroepithelial stem cell differentiation and neurogenesis. Involved in particular in lens epithelial cell gene regulation and stress responses. May play an important role in lens epithelial to fiber cell terminal differentiation. May play a protective role during stress-induced apoptosis. This is PC4 and SFRS1-interacting protein (PSIP1) from Felis catus (Cat).